The sequence spans 398 residues: Phosphoglycerate kinase (398 aa).

Substrate contacts are provided by residues 21–23 (DFN), R36, 59–62 (HLGR), R119, and R157. ATP is bound by residues K208, G296, E327, and 354–357 (GGDS).

It belongs to the phosphoglycerate kinase family. Monomer.

It localises to the cytoplasm. The catalysed reaction is (2R)-3-phosphoglycerate + ATP = (2R)-3-phospho-glyceroyl phosphate + ADP. The protein operates within carbohydrate degradation; glycolysis; pyruvate from D-glyceraldehyde 3-phosphate: step 2/5. The protein is Phosphoglycerate kinase of Streptococcus sanguinis (strain SK36).